The sequence spans 287 residues: Pyridoxal kinase PdxY (287 aa).

Substrate-binding positions include S10 and 45–46 (TQ). Residues D112, A144, E149, K182, and 209-212 (RPLV) contribute to the ATP site. A substrate-binding site is contributed by D224.

It belongs to the pyridoxine kinase family. PdxY subfamily. As to quaternary structure, homodimer. It depends on Mg(2+) as a cofactor.

The enzyme catalyses pyridoxal + ATP = pyridoxal 5'-phosphate + ADP + H(+). The protein operates within cofactor metabolism; pyridoxal 5'-phosphate salvage; pyridoxal 5'-phosphate from pyridoxal: step 1/1. In terms of biological role, pyridoxal kinase involved in the salvage pathway of pyridoxal 5'-phosphate (PLP). Catalyzes the phosphorylation of pyridoxal to PLP. In Escherichia coli O157:H7, this protein is Pyridoxal kinase PdxY.